Consider the following 482-residue polypeptide: Chromosomal replication initiator protein DnaA (482 aa).

Residues 1-71 (MKQSILFERV…TGLFQAEDPE (71 aa)) are domain I, interacts with DnaA modulators. Positions 71 to 139 (EILKIEVLVR…ASFGSPLFGS (69 aa)) are domain II. The domain III, AAA+ region stretch occupies residues 140–362 (PLDSRFTFDT…GAFNQLVFRR (223 aa)). G186, G188, K189, and T190 together coordinate ATP. The interval 363-482 (SFEPNLSIER…VELLKRLINE (120 aa)) is domain IV, binds dsDNA.

The protein belongs to the DnaA family. As to quaternary structure, oligomerizes as a right-handed, spiral filament on DNA at oriC.

Its subcellular location is the cytoplasm. Functionally, plays an essential role in the initiation and regulation of chromosomal replication. ATP-DnaA binds to the origin of replication (oriC) to initiate formation of the DNA replication initiation complex once per cell cycle. Binds the DnaA box (a 9 base pair repeat at the origin) and separates the double-stranded (ds)DNA. Forms a right-handed helical filament on oriC DNA; dsDNA binds to the exterior of the filament while single-stranded (ss)DNA is stabiized in the filament's interior. The ATP-DnaA-oriC complex binds and stabilizes one strand of the AT-rich DNA unwinding element (DUE), permitting loading of DNA polymerase. After initiation quickly degrades to an ADP-DnaA complex that is not apt for DNA replication. Binds acidic phospholipids. In Rhizobium johnstonii (strain DSM 114642 / LMG 32736 / 3841) (Rhizobium leguminosarum bv. viciae), this protein is Chromosomal replication initiator protein DnaA.